Reading from the N-terminus, the 198-residue chain is Shikimate kinase (198 aa).

26 to 31 serves as a coordination point for ATP; that stretch reads GSGKSQ. Ser30 provides a ligand contact to Mg(2+). Residues Asp48, Arg72, and Gly94 each contribute to the substrate site. Arg132 provides a ligand contact to ATP. Arg151 contributes to the substrate binding site. Gln167 is a binding site for ATP.

This sequence belongs to the shikimate kinase family. Monomer. Requires Mg(2+) as cofactor.

The protein resides in the cytoplasm. It carries out the reaction shikimate + ATP = 3-phosphoshikimate + ADP + H(+). The protein operates within metabolic intermediate biosynthesis; chorismate biosynthesis; chorismate from D-erythrose 4-phosphate and phosphoenolpyruvate: step 5/7. In terms of biological role, catalyzes the specific phosphorylation of the 3-hydroxyl group of shikimic acid using ATP as a cosubstrate. The sequence is that of Shikimate kinase from Prochlorococcus marinus (strain NATL2A).